The sequence spans 472 residues: 3-isopropylmalate dehydratase large subunit (472 aa).

Residues cysteine 352, cysteine 413, and cysteine 416 each coordinate [4Fe-4S] cluster.

Belongs to the aconitase/IPM isomerase family. LeuC type 1 subfamily. In terms of assembly, heterodimer of LeuC and LeuD. It depends on [4Fe-4S] cluster as a cofactor.

The enzyme catalyses (2R,3S)-3-isopropylmalate = (2S)-2-isopropylmalate. It functions in the pathway amino-acid biosynthesis; L-leucine biosynthesis; L-leucine from 3-methyl-2-oxobutanoate: step 2/4. Functionally, catalyzes the isomerization between 2-isopropylmalate and 3-isopropylmalate, via the formation of 2-isopropylmaleate. The protein is 3-isopropylmalate dehydratase large subunit of Pseudomonas fluorescens (strain ATCC BAA-477 / NRRL B-23932 / Pf-5).